Consider the following 357-residue polypeptide: S-adenosylmethionine decarboxylase proenzyme (357 aa).

Residues Glu-11 and Glu-14 contribute to the active site. Ser-71 (schiff-base intermediate with substrate; via pyruvic acid) is an active-site residue. At Ser-71 the chain carries Pyruvic acid (Ser); by autocatalysis. The active-site Proton donor; for catalytic activity is Cys-85. Active-site proton acceptor; for processing activity residues include Ser-234 and His-247.

The protein belongs to the eukaryotic AdoMetDC family. Pyruvate is required as a cofactor. In terms of processing, is synthesized initially as an inactive proenzyme. Formation of the active enzyme involves a self-maturation process in which the active site pyruvoyl group is generated from an internal serine residue via an autocatalytic post-translational modification. Two non-identical subunits are generated from the proenzyme in this reaction, and the pyruvate is formed at the N-terminus of the alpha chain, which is derived from the carboxyl end of the proenzyme. The post-translation cleavage follows an unusual pathway, termed non-hydrolytic serinolysis, in which the side chain hydroxyl group of the serine supplies its oxygen atom to form the C-terminus of the beta chain, while the remainder of the serine residue undergoes an oxidative deamination to produce ammonia and the pyruvoyl group blocking the N-terminus of the alpha chain.

It catalyses the reaction S-adenosyl-L-methionine + H(+) = S-adenosyl 3-(methylsulfanyl)propylamine + CO2. The protein operates within amine and polyamine biosynthesis; S-adenosylmethioninamine biosynthesis; S-adenosylmethioninamine from S-adenosyl-L-methionine: step 1/1. The polypeptide is S-adenosylmethionine decarboxylase proenzyme (SAMDC) (Catharanthus roseus (Madagascar periwinkle)).